Here is a 556-residue protein sequence, read N- to C-terminus: 2-isopropylmalate synthase (556 aa).

Positions 33–307 (PIWCSSDLRD…DPELDFSDID (275 aa)) constitute a Pyruvate carboxyltransferase domain. Residues D42, H246, H248, and N282 each contribute to the Mg(2+) site. Positions 439–556 (ANTPYALISH…SLSQTQAKAA (118 aa)) are regulatory domain.

The protein belongs to the alpha-IPM synthase/homocitrate synthase family. LeuA type 2 subfamily. As to quaternary structure, homodimer. Mg(2+) serves as cofactor.

The protein resides in the cytoplasm. The enzyme catalyses 3-methyl-2-oxobutanoate + acetyl-CoA + H2O = (2S)-2-isopropylmalate + CoA + H(+). It functions in the pathway amino-acid biosynthesis; L-leucine biosynthesis; L-leucine from 3-methyl-2-oxobutanoate: step 1/4. Functionally, catalyzes the condensation of the acetyl group of acetyl-CoA with 3-methyl-2-oxobutanoate (2-ketoisovalerate) to form 3-carboxy-3-hydroxy-4-methylpentanoate (2-isopropylmalate). The chain is 2-isopropylmalate synthase from Pseudomonas savastanoi pv. phaseolicola (strain 1448A / Race 6) (Pseudomonas syringae pv. phaseolicola (strain 1448A / Race 6)).